Consider the following 256-residue polypeptide: MTEVGVIGGTGFQPGLPERRRTVFTPYGTVRVDITRVGDHRVYFINRHGKGHDLPPHRINYRAIVWAMRELGVKRILATNSVGVINSDEYEPGDIVLPVDFLDFTKRRPTTFYDEKVVHVDVTEPYCPELREALLKAADDLGYTVKEGAVYVATEGPRFETPAEIRAFRKLGGDIVGMTGFPEVVLARELEICYASVCLCTNYAAGIDDRRRTIDEVFELVEELRPKAVELIERCIEYIPPKRSCPCSQALEGAEV.

Phosphate-binding positions include T10 and 47–48 (RH). M178 serves as a coordination point for substrate. Position 179 (T179) interacts with phosphate. Substrate is bound at residue 202-204 (NYA).

It belongs to the PNP/MTAP phosphorylase family. MTAP subfamily. In terms of assembly, homotrimer.

It carries out the reaction S-methyl-5'-thioinosine + phosphate = 5-(methylsulfanyl)-alpha-D-ribose 1-phosphate + hypoxanthine. It functions in the pathway purine metabolism; purine nucleoside salvage. Functionally, catalyzes the reversible phosphorylation of S-methyl-5'-thioinosine (MTI) to hypoxanthine and 5-methylthioribose-1-phosphate. Involved in the breakdown of S-methyl-5'-thioadenosine (MTA), a major by-product of polyamine biosynthesis. Catabolism of (MTA) occurs via deamination to MTI and phosphorolysis to hypoxanthine. This is Probable S-methyl-5'-thioinosine phosphorylase from Methanopyrus kandleri (strain AV19 / DSM 6324 / JCM 9639 / NBRC 100938).